A 340-amino-acid polypeptide reads, in one-letter code: MSELDQLRQEAEQLKNQIRDARKACADATLSQITNNIDPVGRIQMRTRRTLRGHLAKIYAMHWGTDSRLLVSASQDGKLIIWDSYTTNKVHAIPLRSSWVMTCAYAPSGNYVACGGLDNICSIYNLKTREGNVRVSRELAGHTGYLSCCRFLDDNQIVTSSGDTTCALWDIETGQQTTTFTGHTGDVMSLSLAPDTRLFVSGACDASAKLWDVREGMCRQTFTGHESDINAICFFPNGNAFATGSDDATCRLFDLRADQELMTYSHDNIICGITSVSFSKSGRLLLAGYDDFNCNVWDALKADRAGVLAGHDDRVSCLGVTDDGMAVATGSWDSFLKIWN.

Ser-2 carries the post-translational modification N-acetylserine. A Phosphoserine modification is found at Ser-2. WD repeat units follow at residues 46–94, 95–140, 141–181, 182–223, 224–267, 268–309, and 310–340; these read RTRR…HAIP, LRSS…RELA, GHTG…TTFT, GHTG…QTFT, GHES…YSHD, NIIC…GVLA, and GHDD…KIWN. Residue His-266 is modified to Phosphohistidine.

Belongs to the WD repeat G protein beta family. G proteins are composed of 3 units, alpha, beta and gamma. The heterodimer formed by GNB1 and GNG2 interacts with ARHGEF5. The heterodimer formed by GNB1 and GNG2 interacts with GRK2. Forms a complex with GNAO1 and GNG3. Interacts with ARHGEF18 and RASD2. Forms complexes with TAS2R14 and G-proteins; these complexes play a role in the perception of bitterness. Component of the TAS2R14-GNAI1 complex, consisting of TAS2R14, GNAI1, GNB1 and GNG2. Component of the TAS2R14-GNAT3 complex, consisting of TAS2R14, GNAT3, GNB1 and GNG2. Component of the TAS2R14-GNAS2 complex, consisting of TAS2R14, GNAS2, GNB1 and GNG2. Phosphorylation at His-266 by NDKB contributes to G protein activation by increasing the high energetic phosphate transfer onto GDP.

Its function is as follows. Guanine nucleotide-binding proteins (G proteins) are involved as a modulator or transducer in various transmembrane signaling systems. The beta and gamma chains are required for the GTPase activity, for replacement of GDP by GTP, and for G protein-effector interaction. The protein is Guanine nucleotide-binding protein G(I)/G(S)/G(T) subunit beta-1 (GNB1) of Pongo abelii (Sumatran orangutan).